The following is a 143-amino-acid chain: Large ribosomal subunit protein uL11 (143 aa).

This sequence belongs to the universal ribosomal protein uL11 family. Part of the ribosomal stalk of the 50S ribosomal subunit. Interacts with L10 and the large rRNA to form the base of the stalk. L10 forms an elongated spine to which L12 dimers bind in a sequential fashion forming a multimeric L10(L12)X complex. One or more lysine residues are methylated.

Its function is as follows. Forms part of the ribosomal stalk which helps the ribosome interact with GTP-bound translation factors. This chain is Large ribosomal subunit protein uL11, found in Burkholderia mallei (strain NCTC 10247).